The chain runs to 582 residues: Myoneurin (582 aa).

The BTB domain maps to 24 to 89 (CDCTIVIGEF…IYTGTLNLDS (66 aa)). A disordered region spans residues 169-197 (QGALAKKSSQTKKKKKAFNSPKTGQNKTV). Short sequence motifs (nuclear localization signal) lie at residues 174–190 (KKSSQTKKKKKAFNSPK) and 257–262 (KRKRGK). A compositionally biased stretch (polar residues) spans 188–197 (SPKTGQNKTV). Ser-289 carries the post-translational modification Phosphoserine. A C2H2-type 1; degenerate zinc finger spans residues 302 to 324 (PMCNTRGKVFSEASSLRRHMRIH). 6 C2H2-type zinc fingers span residues 330 to 352 (YVCHLCGKAFTQCNQLKTHVRTH), 358 to 381 (YKCELCDKGFAQKCQLVFHSRMHH), 387 to 409 (YKCDVCNLQFATSSNLKIHARKH), 415 to 437 (YVCDRCGQRFAQASTLTYHVRRH), 443 to 465 (YVCDTCGKAFAVSSSLITHSRKH), and 471 to 494 (FICELCGNSYTDIKNLKKHKTKVH). Positions 489 to 538 (HKTKVHSGADKTPDSSAEDHTLSEQDSIQKSPLSETMDVKPSDTTLPLAL) are disordered. Over residues 495 to 511 (SGADKTPDSSAEDHTLS) the composition is skewed to basic and acidic residues. The segment covering 512–522 (EQDSIQKSPLS) has biased composition (polar residues).

This sequence belongs to the krueppel C2H2-type zinc-finger protein family.

The protein resides in the nucleus. The chain is Myoneurin (MYNN) from Pongo abelii (Sumatran orangutan).